We begin with the raw amino-acid sequence, 189 residues long: Ornithine decarboxylase antizyme 2 (189 aa).

Ser-186 bears the Phosphoserine mark.

The protein belongs to the ODC antizyme family. As to quaternary structure, interacts with ODC1 and thereby sterically blocks ODC homodimerization. Interacts with AZIN2; this interaction disrupts the interaction between the antizyme and ODC1.

It localises to the nucleus. In terms of biological role, ornithine decarboxylase (ODC) antizyme protein that negatively regulates ODC activity and intracellular polyamine biosynthesis and uptake in response to increased intracellular polyamine levels. Binds to ODC monomers, inhibiting the assembly of the functional ODC homodimers. Does not target the ODC monomers for degradation, which allows a protein synthesis-independent restoration of ODC activity. Involved in the translocation of AZIN2 from ER-Golgi intermediate compartment (ERGIC) to the cytosol. This Mus musculus (Mouse) protein is Ornithine decarboxylase antizyme 2 (Oaz2).